The sequence spans 422 residues: Pre-B-cell leukemia transcription factor 2 (422 aa).

A disordered region spans residues 1-43 (MDEQGRLMQARGVGIPGHPIHGGPQTLTPHPMHEPPADNGEPR). Residues 31–43 (PMHEPPADNGEPR) show a composition bias toward basic and acidic residues. The region spanning 42–236 (PRKQDIGDIL…VMILRSRFLD (195 aa)) is the PBC domain. The PBC-A stretch occupies residues 49 to 128 (DILQQIMTIT…EGVAGPEKGG (80 aa)). Positions 131–236 (AAAAAAAAAS…VMILRSRFLD (106 aa)) are PBC-B. The segment at residues 237 to 299 (ARRKRRNFSK…NKRIRYKKNI (63 aa)) is a DNA-binding region (homeobox). Disordered regions lie at residues 319 to 341 (QGGH…GSFN) and 353 to 422 (QGLN…DTSN). Polar residues predominate over residues 401 to 410 (VTPSSVTSPT).

It belongs to the TALE/PBX homeobox family.

It is found in the nucleus. Functionally, transcriptional activator that binds the sequence 5'-ATCAATCAA-3'. This is Pre-B-cell leukemia transcription factor 2 from Xenopus tropicalis (Western clawed frog).